The sequence spans 390 residues: Terminal nucleotidyltransferase 5C (390 aa).

This sequence belongs to the TENT family.

Its subcellular location is the nucleus. The protein localises to the cytoplasm. It localises to the cytoskeleton. It is found in the microtubule organizing center. The protein resides in the centrosome. It carries out the reaction RNA(n) + ATP = RNA(n)-3'-adenine ribonucleotide + diphosphate. Functionally, catalyzes the transfer of one adenosine molecule from an ATP to an mRNA poly(A) tail bearing a 3'-OH terminal group and enhances mRNA stability and gene expression. The sequence is that of Terminal nucleotidyltransferase 5C from Gallus gallus (Chicken).